Reading from the N-terminus, the 300-residue chain is tRNA dimethylallyltransferase (300 aa).

Position 9-16 (9-16 (GTTASGKS)) interacts with ATP. 11 to 16 (TASGKS) provides a ligand contact to substrate. Residues 34-37 (DSLC) are interaction with substrate tRNA.

Belongs to the IPP transferase family. Monomer. It depends on Mg(2+) as a cofactor.

The catalysed reaction is adenosine(37) in tRNA + dimethylallyl diphosphate = N(6)-dimethylallyladenosine(37) in tRNA + diphosphate. Catalyzes the transfer of a dimethylallyl group onto the adenine at position 37 in tRNAs that read codons beginning with uridine, leading to the formation of N6-(dimethylallyl)adenosine (i(6)A). The sequence is that of tRNA dimethylallyltransferase from Campylobacter fetus subsp. fetus (strain 82-40).